The primary structure comprises 929 residues: MTASSVEQLRKEGNELFKCGDYGGALAAYTQALGLDATPQDQAVLHRNRAACYLKLEDYDKAETEASKAIEKDGGDVKALYRRSQALEKLGRLDQAVLDLQRCVSLEPKNKVFQEALRNIGGQIQEKVRYMSSTDAKVEQMFQILLDPEEKGTEKKQKASQNLVVLAREDAGAEKTLRSNGVQLLQRLLDTGETDLMLAALRTLVGICSEHQSRTVATLSILGTRRVVSILGVESQSVSLAACHLLQVMFDALKEGVKKGFRGKEGAIIVDPARELKVLISNLLDLLTEVGVSGQGRDNALTLLIKAVPRKSLKDPNNSLTLWVIDQGLKKILEVGGSLQDPPGELAVTANSRMSASILLSKLFDDLKCDAERENFHRLCENYIKSWFEGRGLAGKLRAIQTVSCLLQGPCDAGNRALELSGVMEGVIALCASEQEEEQLVAVEALIHAAGKAKRASFITANGVSLLKDLYKRSEKDSIRIRALVGLCKLGSAGGTDFSMKQFAEGSTLKLAKQCRKWLCNDQIDAGTRRWAVEGLAYLTFDADVKEEFVEDAAALKALFQLSRSEERSVLFAVASALVNCTNSYDYEEPDPKMVELAKYAKQHVPEQHPKDKPSFVRARVKKLLAAGVVSAMVYMVKTESPVLTSSCRELLSRIFLALVEEVEDRGTVVAQGGGRALIPLALEGTDVGQTKAAQALAKLTITSNPEMTFPGERIYEVVRPLVSLLHLNCSGLQNFEALMALTNLAGISERLRQKILKEKAVPMIEGYMFEEHEMIRRASTECMCNLAMSKEVQDLFEAEGNDRLKLLVLYSGEDDELLQRAAAGGLAMLTSMRPTLCSRIPQVTTHWLEILQALLLSSNQELQHRGAVVVLNMVEASREIASTLMESEMMEILSVLAKGDHSPVTRAAAACLDKAVEYGLIQPNQDGE.

3 TPR repeats span residues 6–39 (VEQL…DATP), 43–76 (AVLH…DGGD), and 77–110 (VKAL…EPKN). Residue K55 is modified to N6-acetyllysine. K468 carries the post-translational modification N6-acetyllysine.

As to quaternary structure, interacts with PGR isoforms A and B as well as with NR3C1 in the absence of ligand, and with HSP90AB1. Binding to HSP90AB1 involves 2 UNC45A monomers per HSP90AB1 dimer.

Its subcellular location is the cytoplasm. It localises to the perinuclear region. It is found in the nucleus. Functionally, may act as co-chaperone for HSP90 (Potential). Prevents the stimulation of HSP90AB1 ATPase activity by AHSA1. Positive factor in promoting PGR function in the cell. May be necessary for proper folding of myosin (Potential). Necessary for normal cell proliferation. Necessary for normal myotube formation and myosin accumulation during muscle cell development. May play a role in erythropoiesis in stroma cells in the spleen. This chain is Protein unc-45 homolog A (UNC45A), found in Pongo abelii (Sumatran orangutan).